The following is a 1708-amino-acid chain: Chromatin-remodeling ATPase INO80 (1708 aa).

4 disordered regions span residues 1 to 312, 408 to 581, 626 to 648, and 718 to 747; these read MTGA…RKTL, EIQD…SAFE, ASKQ…QARA, and AGAD…IDLP. Composition is skewed to polar residues over residues 24–37 and 88–102; these read PNKN…NDQY and SSQY…TPQF. 2 stretches are compositionally biased toward low complexity: residues 108 to 122 and 211 to 220; these read YSAS…SSYN and ALPGPATTIT. 3 stretches are compositionally biased toward basic and acidic residues: residues 265-285, 408-417, and 426-463; these read RLEK…EPKS, EIQDEKERKK, and ENTV…ERAQ. Positions 395–478 form a coiled coil; the sequence is ANEASVIAEV…TKRALEGVTS (84 aa). A compositionally biased stretch (basic residues) spans 507–522; it reads PSRRKSGRSGTSRPKK. 3 stretches are compositionally biased toward basic and acidic residues: residues 523 to 534, 551 to 571, and 632 to 646; these read SKEQKQAEKDAA, PKED…RSKE, and KWQE…DTQA. The DBINO domain occupies 592 to 717; the sequence is IWRDIARKDI…SHFIGRKIKG (126 aa). Positions 634–706 form a coiled coil; sequence QERTNKSMKD…LNFLISQTEL (73 aa). A Helicase ATP-binding domain is found at 845 to 1017; sequence VNLYEQGING…WALLHFIMPT (173 aa). Position 858 to 865 (858 to 865) interacts with ATP; the sequence is DEMGLGKT. The short motif at 968 to 971 is the DEAQ box element; that stretch reads DEAQ. In terms of domain architecture, Helicase C-terminal spans 1422-1582; the sequence is KLDELLRELK…GVDFNTRNRE (161 aa). Positions 1643-1708 are disordered; that stretch reads GNFDDISAKP…LIDGDGGLES (66 aa). The segment covering 1658-1672 has biased composition (polar residues); that stretch reads PVSTADNFGTPSSTP. Basic residues predominate over residues 1675–1691; that stretch reads KRGRGRGNGKGSSKRAK. Positions 1692-1701 are enriched in basic and acidic residues; that stretch reads TTTERLRLID.

Belongs to the SNF2/RAD54 helicase family. Component of the INO80 chromatin-remodeling complex.

Its subcellular location is the nucleus. It catalyses the reaction ATP + H2O = ADP + phosphate + H(+). ATPase component of the INO80 complex which remodels chromatin by shifting nucleosomes and is involved in DNA repair. The polypeptide is Chromatin-remodeling ATPase INO80 (ino80) (Aspergillus fumigatus (strain ATCC MYA-4609 / CBS 101355 / FGSC A1100 / Af293) (Neosartorya fumigata)).